Reading from the N-terminus, the 500-residue chain is Polyamine oxidase 1 (500 aa).

An N-terminal signal peptide occupies residues 1 to 28; that stretch reads MSSSPSFGLLAVAALLLALSLAQHGSLA. Residues 42-43, Glu63, Arg71, and 87-88 contribute to the FAD site; these read MS and NW. Glu90 lines the substrate pocket. Asn105 is a glycosylation site (N-linked (GlcNAc...) asparagine). Glu198 provides a ligand contact to substrate. Residues Val265, Tyr427, and Glu458 each contribute to the FAD site. Gly466 is a substrate binding site. Position 467–468 (467–468) interacts with FAD; the sequence is YV. A disulfide bridge links Cys485 with Cys491.

The protein belongs to the flavin monoamine oxidase family. In terms of assembly, monomer. FAD serves as cofactor.

Its subcellular location is the secreted. The protein resides in the extracellular space. It localises to the apoplast. It is found in the cell wall. The catalysed reaction is spermidine + O2 + H2O = 4-aminobutanal + propane-1,3-diamine + H2O2. It carries out the reaction N(8)-acetylspermidine + O2 + H2O = 4-acetamidobutanal + propane-1,3-diamine + H2O2. The enzyme catalyses spermine + O2 + H2O = N-(3-aminopropyl)-4-aminobutanal + propane-1,3-diamine + H2O2. It catalyses the reaction N(1)-acetylspermine + O2 + H2O = N-(3-acetamidopropyl)-4-aminobutanal + propane-1,3-diamine + H2O2. Its pathway is amine and polyamine degradation; spermine degradation. Functionally, flavoenzyme involved in polyamine back-conversion. Catalyzes the oxidation of the secondary amino group of polyamines, such as spermine, spermidine and their acetyl derivatives. Plays an important role in the regulation of polyamine intracellular concentration. In Zea mays (Maize), this protein is Polyamine oxidase 1.